The primary structure comprises 208 residues: Uracil phosphoribosyltransferase (208 aa).

5-phospho-alpha-D-ribose 1-diphosphate is bound by residues arginine 78, arginine 103, and 130 to 138; that span reads DPMLATGGS. Uracil contacts are provided by residues isoleucine 193 and 198–200; that span reads GDA. Aspartate 199 is a 5-phospho-alpha-D-ribose 1-diphosphate binding site.

The protein belongs to the UPRTase family. Requires Mg(2+) as cofactor.

The enzyme catalyses UMP + diphosphate = 5-phospho-alpha-D-ribose 1-diphosphate + uracil. Its pathway is pyrimidine metabolism; UMP biosynthesis via salvage pathway; UMP from uracil: step 1/1. With respect to regulation, allosterically activated by GTP. Its function is as follows. Catalyzes the conversion of uracil and 5-phospho-alpha-D-ribose 1-diphosphate (PRPP) to UMP and diphosphate. The polypeptide is Uracil phosphoribosyltransferase (Histophilus somni (strain 129Pt) (Haemophilus somnus)).